The sequence spans 226 residues: Probable proteasome subunit beta type-7 (226 aa).

This sequence belongs to the peptidase T1B family. As to quaternary structure, the 26S proteasome consists of a 20S proteasome core and two 19S regulatory subunits. The 20S proteasome core is composed of 28 subunits that are arranged in four stacked rings, resulting in a barrel-shaped structure. The two end rings are each formed by seven alpha subunits, and the two central rings are each formed by seven beta subunits. The catalytic chamber with the active sites is on the inside of the barrel.

It is found in the cytoplasm. Its subcellular location is the nucleus. Its function is as follows. Non-catalytic component of the proteasome which degrades poly-ubiquitinated proteins in the cytoplasm and in the nucleus. It is essential for the regulated turnover of proteins and for the removal of misfolded proteins. The proteasome is a multicatalytic proteinase complex that is characterized by its ability to cleave peptides with Arg, Phe, Tyr, Leu, and Glu adjacent to the leaving group at neutral or slightly basic pH. It has an ATP-dependent proteolytic activity. The polypeptide is Probable proteasome subunit beta type-7 (PRE4) (Encephalitozoon cuniculi (strain GB-M1) (Microsporidian parasite)).